Here is a 116-residue protein sequence, read N- to C-terminus: Non-specific lipid-transfer protein 10 (116 aa).

An N-terminal signal peptide occupies residues Met1 to Ala22. 4 cysteine pairs are disulfide-bonded: Cys26/Cys73, Cys36/Cys50, Cys51/Cys98, and Cys71/Cys112.

It belongs to the plant LTP family.

Its function is as follows. Plant non-specific lipid-transfer proteins transfer phospholipids as well as galactolipids across membranes. May play a role in wax or cutin deposition in the cell walls of expanding epidermal cells and certain secretory tissues. This Arabidopsis thaliana (Mouse-ear cress) protein is Non-specific lipid-transfer protein 10 (LTP10).